The following is a 284-amino-acid chain: tRNA (guanine-N(7)-)-methyltransferase (284 aa).

S-adenosyl-L-methionine is bound by residues Gly-102, 125-126 (EI), 160-161 (NT), and Cys-180. Asp-183 is a catalytic residue. 258-260 (TEE) is an S-adenosyl-L-methionine binding site.

Belongs to the class I-like SAM-binding methyltransferase superfamily. TrmB family. In terms of assembly, forms a complex with TRM82.

Its subcellular location is the nucleus. It carries out the reaction guanosine(46) in tRNA + S-adenosyl-L-methionine = N(7)-methylguanosine(46) in tRNA + S-adenosyl-L-homocysteine. It functions in the pathway tRNA modification; N(7)-methylguanine-tRNA biosynthesis. Catalyzes the formation of N(7)-methylguanine at position 46 (m7G46) in tRNA. The sequence is that of tRNA (guanine-N(7)-)-methyltransferase from Podospora anserina (strain S / ATCC MYA-4624 / DSM 980 / FGSC 10383) (Pleurage anserina).